A 369-amino-acid chain; its full sequence is Probable methyltransferase TCM_000331 (369 aa).

The S-adenosyl-L-homocysteine site is built by Tyr18, Cys60, Asn65, Asp98, Leu99, Ser137, and Phe138. Mg(2+) is bound by residues Asn176, Asp261, Phe263, and Asn264.

The protein belongs to the methyltransferase superfamily. Type-7 methyltransferase family. Requires Mg(2+) as cofactor.

The polypeptide is Probable methyltransferase TCM_000331 (Theobroma cacao (Cacao)).